The primary structure comprises 295 residues: Protoheme IX farnesyltransferase (295 aa).

A run of 9 helical transmembrane segments spans residues 30–50 (LVVL…HPLI), 51–71 (AVIS…INMW), 93–115 (ISRS…IMMI), 119–136 (YISG…IYVY), 148–168 (IVIG…SVTG), 175–195 (LVLF…LSLL), 219–239 (IHIL…GLFL), 244–264 (LYEI…FQVF), and 275–295 (MFTY…LSSF).

This sequence belongs to the UbiA prenyltransferase family. Protoheme IX farnesyltransferase subfamily.

The protein localises to the cell inner membrane. It carries out the reaction heme b + (2E,6E)-farnesyl diphosphate + H2O = Fe(II)-heme o + diphosphate. It participates in porphyrin-containing compound metabolism; heme O biosynthesis; heme O from protoheme: step 1/1. In terms of biological role, converts heme B (protoheme IX) to heme O by substitution of the vinyl group on carbon 2 of heme B porphyrin ring with a hydroxyethyl farnesyl side group. The sequence is that of Protoheme IX farnesyltransferase from Ehrlichia ruminantium (strain Gardel).